The chain runs to 130 residues: Small ribosomal subunit protein uS9 (130 aa).

Belongs to the universal ribosomal protein uS9 family.

The chain is Small ribosomal subunit protein uS9 from Pseudomonas putida (strain W619).